Reading from the N-terminus, the 953-residue chain is Catenin alpha-2 (953 aa).

Phosphothreonine is present on Thr632. A phosphoserine mark is found at Ser640, Ser651, and Ser901. Residues 912–927 (EKKPLVKREKPEEFQT) are compositionally biased toward basic and acidic residues. The disordered stretch occupies residues 912–939 (EKKPLVKREKPEEFQTRVRRGSQKKHIS). Over residues 928–938 (RVRRGSQKKHI) the composition is skewed to basic residues. Ser939 bears the Phosphoserine mark.

The protein belongs to the vinculin/alpha-catenin family. In terms of assembly, interacts with CDH1 and CDH2. Interacts with ZNF639; recruits CTNNA2 to the nucleus. Interacts with F-actin. In terms of tissue distribution, expressed in neural tissues, with strongest expression in fetal and adult brain. Expressed in the developing cortical plate and marginal zone of 20-week-old human fetal brain.

It localises to the cell membrane. Its subcellular location is the cytoplasm. The protein resides in the cytoskeleton. The protein localises to the cell junction. It is found in the adherens junction. It localises to the cell projection. Its subcellular location is the axon. The protein resides in the nucleus. Its function is as follows. May function as a linker between cadherin adhesion receptors and the cytoskeleton to regulate cell-cell adhesion and differentiation in the nervous system. Required for proper regulation of cortical neuronal migration and neurite growth. It acts as a negative regulator of Arp2/3 complex activity and Arp2/3-mediated actin polymerization. It thereby suppresses excessive actin branching which would impair neurite growth and stability. Regulates morphological plasticity of synapses and cerebellar and hippocampal lamination during development. Functions in the control of startle modulation. This chain is Catenin alpha-2 (CTNNA2), found in Homo sapiens (Human).